The following is a 159-amino-acid chain: SsrA-binding protein (159 aa).

The segment at 134–159 is disordered; that stretch reads KEHDKRDTERDRDWSRDKERLMKHNA.

Belongs to the SmpB family.

The protein localises to the cytoplasm. Required for rescue of stalled ribosomes mediated by trans-translation. Binds to transfer-messenger RNA (tmRNA), required for stable association of tmRNA with ribosomes. tmRNA and SmpB together mimic tRNA shape, replacing the anticodon stem-loop with SmpB. tmRNA is encoded by the ssrA gene; the 2 termini fold to resemble tRNA(Ala) and it encodes a 'tag peptide', a short internal open reading frame. During trans-translation Ala-aminoacylated tmRNA acts like a tRNA, entering the A-site of stalled ribosomes, displacing the stalled mRNA. The ribosome then switches to translate the ORF on the tmRNA; the nascent peptide is terminated with the 'tag peptide' encoded by the tmRNA and targeted for degradation. The ribosome is freed to recommence translation, which seems to be the essential function of trans-translation. This is SsrA-binding protein from Marinomonas sp. (strain MWYL1).